Here is a 755-residue protein sequence, read N- to C-terminus: Cartilage oligomeric matrix protein (755 aa).

A signal peptide spans Met1–Gly19. The COMP N-terminal stretch occupies residues Gly21–Arg84. The 40-residue stretch at Pro85 to Thr124 folds into the EGF-like 1 domain. 21 disulfides stabilise this stretch: Cys89–Cys100, Cys94–Cys109, Cys112–Cys123, Cys129–Cys140, Cys134–Cys149, Cys152–Cys176, Cys182–Cys195, Cys189–Cys204, Cys207–Cys219, Cys227–Cys241, Cys235–Cys251, Cys253–Cys264, Cys280–Cys285, Cys290–Cys310, Cys326–Cys346, Cys349–Cys369, Cys385–Cys405, Cys408–Cys428, Cys446–Cys466, Cys482–Cys502, and Cys518–Cys739. Asn119 carries an N-linked (GlcNAc...) asparagine glycan. An EGF-like 2; calcium-binding domain is found at Asp125 to Thr177. An EGF-like 3; calcium-binding domain is found at Asp178–Gln220. Positions Gly223 to Gly265 constitute an EGF-like 4 domain. TSP type-3 repeat units follow at residues Arg266–Gln298, Glu299–Gln334, Arg335–Gln357, Lys358–Gln393, Ser394–Gln416, Arg417–Gln454, Gln455–Gln490, and Glu491–Leu526. Disordered regions lie at residues Ser296–Lys341 and Lys353–Ala501. Basic and acidic residues-rich tracts occupy residues Pro332–Lys341 and Lys353–Ala368. Ser394 is subject to Phosphoserine. Basic and acidic residues-rich tracts occupy residues Asp412 to Val424 and Asp456 to Ala465. The interval Thr525–Val755 is mediates cell survival and induction of the IAP family of survival proteins. One can recognise a TSP C-terminal domain in the interval Arg530–Pro744. N-linked (GlcNAc...) asparagine glycosylation is present at Asn740.

Belongs to the thrombospondin family. In terms of assembly, pentamer; disulfide-linked. Exists in a more compact conformation in the presence of calcium and shows a more extended conformation in the absence of calcium. Interacts with ITGB3, ITGA5 and FN1. Binding to FN1 requires the presence of divalent cations (Ca(2+), Mg(2+) or Mn(2+)). The greatest amount of binding is seen in the presence of Mn(2+). Interacts with MATN1, MATN3, MATN4 and ACAN. Binds heparin, heparan sulfate and chondroitin sulfate. EDTA dimishes significantly its binding to ACAN and abolishes its binding to MATN3, MATN4 and chondroitin sulfate. Interacts with collagen I, II and IX, and interaction with these collagens is dependent on the presence of zinc ions. Interacts with ADAMTS12. Interacts with ITGA7. It depends on Ca(2+) as a cofactor. In terms of processing, proteolytically cleaved by metalloproteases ADAMTS4 and ADAMTS1 with ADAMTS4 showing more potent activity. As to expression, expressed in cartilage, including nasal, knee epiphyseal and rib tissues. Abundantly expressed in chondrocyte and tendon extracellular matrix (at protein level).

The protein localises to the secreted. Its subcellular location is the extracellular space. It is found in the extracellular matrix. Plays a role in the structural integrity of cartilage via its interaction with other extracellular matrix proteins such as the collagens and fibronectin. Can mediate the interaction of chondrocytes with the cartilage extracellular matrix through interaction with cell surface integrin receptors. Could play a role in the pathogenesis of osteoarthritis. Potent suppressor of apoptosis in both primary chondrocytes and transformed cells. Suppresses apoptosis by blocking the activation of caspase-3 and by inducing the IAP family of survival proteins (BIRC3, BIRC2, BIRC5 and XIAP). Essential for maintaining a vascular smooth muscle cells (VSMCs) contractile/differentiated phenotype under physiological and pathological stimuli. Maintains this phenotype of VSMCs by interacting with ITGA7. The sequence is that of Cartilage oligomeric matrix protein from Mus musculus (Mouse).